We begin with the raw amino-acid sequence, 425 residues long: E3 ubiquitin-protein ligase GW2 (425 aa).

The segment at 62 to 105 adopts an RING-type; degenerate zinc-finger fold; the sequence is CPICFLYYPSLNRSKCCSKGICTECFLQMKPTHTAQPTQCPFCK.

As to expression, expressed in roots, shoots, leaves, inflorescence meristems, stamens, pistils, spikelet hulls and endosperms 4 days after fertilization.

Its subcellular location is the cytoplasm. It catalyses the reaction S-ubiquitinyl-[E2 ubiquitin-conjugating enzyme]-L-cysteine + [acceptor protein]-L-lysine = [E2 ubiquitin-conjugating enzyme]-L-cysteine + N(6)-ubiquitinyl-[acceptor protein]-L-lysine.. Its pathway is protein modification; protein ubiquitination. Its function is as follows. E3 ubiquitin-protein ligase involved in the regulation of grain size. May limit grain width and weight by restricting cell proliferation of the spikelet hull. Possesses E3 ubiquitin-protein ligase activity in vitro. This chain is E3 ubiquitin-protein ligase GW2, found in Oryza sativa subsp. indica (Rice).